Here is a 109-residue protein sequence, read N- to C-terminus: uncharacterized protein (109 aa).

Residues 1–22 (MKRFPLFLLFTLLTLSTVPAQA) form the signal peptide. Residues 39–109 (AYNPDRGRDY…ERRMEDEYGR (71 aa)) are disordered. The span at 41-109 (NPDRGRDYED…ERRMEDEYGR (69 aa)) shows a compositional bias: basic and acidic residues.

This is an uncharacterized protein from Escherichia coli O6:H1 (strain CFT073 / ATCC 700928 / UPEC).